A 112-amino-acid polypeptide reads, in one-letter code: Nucleoid-associated protein FTF0810c (112 aa).

The tract at residues 1–27 is disordered; sequence MNFDMSKLMQQAQKMQEQMKKAQQERE. A compositionally biased stretch (basic and acidic residues) spans 17–27; the sequence is EQMKKAQQERE.

The protein belongs to the YbaB/EbfC family. As to quaternary structure, homodimer.

It is found in the cytoplasm. It localises to the nucleoid. Its function is as follows. Binds to DNA and alters its conformation. May be involved in regulation of gene expression, nucleoid organization and DNA protection. The protein is Nucleoid-associated protein FTF0810c of Francisella tularensis subsp. tularensis (strain FSC 198).